A 138-amino-acid polypeptide reads, in one-letter code: Transcriptional regulator MraZ (138 aa).

SpoVT-AbrB domains are found at residues 3–45 and 74–117; these read EFQH…PLAE and ATEC…AAER.

This sequence belongs to the MraZ family. Forms oligomers.

The protein localises to the cytoplasm. It is found in the nucleoid. This is Transcriptional regulator MraZ from Symbiobacterium thermophilum (strain DSM 24528 / JCM 14929 / IAM 14863 / T).